Reading from the N-terminus, the 564-residue chain is Phenylalanine--tRNA ligase beta subunit (564 aa).

In terms of domain architecture, B5 spans 286–362; it reads YFQNMLEVNV…IGMGLDSFKP (77 aa). 4 residues coordinate Mg(2+): D340, D346, E349, and E350.

Belongs to the phenylalanyl-tRNA synthetase beta subunit family. Type 2 subfamily. As to quaternary structure, tetramer of two alpha and two beta subunits. Mg(2+) is required as a cofactor.

It is found in the cytoplasm. It carries out the reaction tRNA(Phe) + L-phenylalanine + ATP = L-phenylalanyl-tRNA(Phe) + AMP + diphosphate + H(+). The sequence is that of Phenylalanine--tRNA ligase beta subunit from Borrelia turicatae (strain 91E135).